We begin with the raw amino-acid sequence, 686 residues long: Chondroitin synthase (686 aa).

Residues 130 to 417 (YVWAGKRKEL…LLQQKVPYFY (288 aa)) form a galactosaminyltransferase; A1 domain region. UDP-N-acetyl-alpha-D-galactosamine is bound by residues Pro157, Arg161, Asp188, Tyr217, Arg223, and 239–240 (DC). Asp241 contacts Mn(2+). 361–362 (ED) provides a ligand contact to UDP-N-acetyl-alpha-D-galactosamine. Residue His386 participates in Mn(2+) binding. Positions 418-682 (RKKEKIESAT…ECRKYTWEKI (265 aa)) are glucuronosyltransferase; A2 domain. UDP-alpha-D-glucuronate contacts are provided by residues Tyr441, Asp469, and 517–520 (QLDS). Asp521 lines the Mn(2+) pocket. Residues His581 and 603 to 604 (AV) contribute to the UDP-alpha-D-glucuronate site. Residue His631 coordinates Mn(2+).

This sequence belongs to the glycosyltransferase 2 family. CS/HAS subfamily. Requires Mn(2+) as cofactor.

It carries out the reaction 3-O-(beta-D-GlcA-(1-&gt;3)-beta-D-GalNAc-(1-&gt;4)-beta-D-GlcA-(1-&gt;3)-beta-D-Gal-(1-&gt;3)-beta-D-Gal-(1-&gt;4)-beta-D-Xyl)-L-seryl-[protein] + UDP-N-acetyl-alpha-D-galactosamine = 3-O-(beta-D-GalNAc-(1-&gt;4)-beta-D-GlcA-(1-&gt;3)-beta-D-GalNAc-(1-&gt;4)-beta-D-GlcA-(1-&gt;3)-beta-D-Gal-(1-&gt;3)-beta-D-Gal-(1-&gt;4)-beta-D-Xyl)-L-seryl-[protein] + UDP + H(+). The catalysed reaction is 3-O-{beta-D-GlcA-(1-&gt;3)-[beta-D-GalNAc-(1-&gt;4)-beta-D-GlcA-(1-&gt;3)](n)-beta-D-GalNAc-(1-&gt;4)-beta-D-GlcA-(1-&gt;3)-beta-D-Gal-(1-&gt;3)-beta-D-Gal-(1-&gt;4)-beta-D-Xyl}-L-seryl-[protein] + UDP-N-acetyl-alpha-D-galactosamine = 3-O-{[beta-D-GalNAc-(1-&gt;4)-beta-D-GlcA-(1-&gt;3)](n+1)-beta-D-GalNAc-(1-&gt;4)-beta-D-GlcA-(1-&gt;3)-beta-D-Gal-(1-&gt;3)-beta-D-Gal-(1-&gt;4)-beta-D-Xyl}-L-seryl-[protein] + UDP + H(+). It catalyses the reaction 3-O-(beta-D-GalNAc-(1-&gt;4)-beta-D-GlcA-(1-&gt;3)-beta-D-Gal-(1-&gt;3)-beta-D-Gal-(1-&gt;4)-beta-D-Xyl)-L-seryl-[protein] + UDP-alpha-D-glucuronate = 3-O-(beta-D-GlcA-(1-&gt;3)-beta-D-GalNAc-(1-&gt;4)-beta-D-GlcA-(1-&gt;3)-beta-D-Gal-(1-&gt;3)-beta-D-Gal-(1-&gt;4)-beta-D-Xyl)-L-seryl-[protein] + UDP + H(+). The enzyme catalyses 3-O-{[beta-D-GalNAc-(1-&gt;4)-beta-D-GlcA-(1-&gt;3)](n)-beta-D-GalNAc-(1-&gt;4)-beta-D-GlcA-(1-&gt;3)-beta-D-Gal-(1-&gt;3)-beta-D-Gal-(1-&gt;4)-beta-D-Xyl}-L-seryl-[protein] + UDP-alpha-D-glucuronate = 3-O-{beta-D-GlcA-(1-&gt;3)-[beta-D-GalNAc-(1-&gt;4)-beta-D-GlcA-(1-&gt;3)](n)-beta-D-GalNAc-(1-&gt;4)-beta-D-GlcA-(1-&gt;3)-beta-D-Gal-(1-&gt;3)-beta-D-Gal-(1-&gt;4)-beta-D-Xyl}-L-seryl-[protein] + UDP + H(+). In terms of biological role, glycosyltransferase that catalyzes elongation of chondroitin, a polysaccharide composed of a repeating disaccharide of N-acetylgalactosamine (GalNAc) and glucuronic acid (GlcUA) units, by alternatively transferring the GlcUA and GalNAc moiety from UDP-GlcUA and UDP-GalNAc to the non-reducing ends of the chondroitin chain. Each chondroitin unit has the composition beta-(1-&gt;4)-GlcUA-beta-(1-&gt;3)-GalNAc. The chain is Chondroitin synthase (kfoC) from Escherichia coli.